The sequence spans 369 residues: tRNA-specific 2-thiouridylase MnmA (369 aa).

Residues 7 to 14 (GISGGVDS) and M33 contribute to the ATP site. Positions 93 to 95 (NPD) are interaction with target base in tRNA. Residue C98 is the Nucleophile of the active site. C98 and C195 are oxidised to a cystine. G123 contributes to the ATP binding site. An interaction with tRNA region spans residues 145-147 (KDQ). Residue C195 is the Cysteine persulfide intermediate of the active site. Residues 307-308 (RY) form an interaction with tRNA region.

Belongs to the MnmA/TRMU family. In terms of assembly, interacts with TusE.

The protein resides in the cytoplasm. It carries out the reaction S-sulfanyl-L-cysteinyl-[protein] + uridine(34) in tRNA + AH2 + ATP = 2-thiouridine(34) in tRNA + L-cysteinyl-[protein] + A + AMP + diphosphate + H(+). Its function is as follows. Catalyzes the 2-thiolation of uridine at the wobble position (U34) of tRNA(Lys), tRNA(Glu) and tRNA(Gln), leading to the formation of s(2)U34, the first step of tRNA-mnm(5)s(2)U34 synthesis. Sulfur is provided by IscS, via a sulfur-relay system. Binds ATP and its substrate tRNAs. This is tRNA-specific 2-thiouridylase MnmA from Blochmanniella floridana.